The sequence spans 938 residues: Isoleucine--tRNA ligase (938 aa).

The short motif at proline 58–histidine 68 is the 'HIGH' region element. Lysine 183 is modified (N6-acetyllysine). An L-isoleucyl-5'-AMP-binding site is contributed by glutamate 561. The 'KMSKS' region motif lies at lysine 602–serine 606. Lysine 605 lines the ATP pocket. Zn(2+)-binding residues include cysteine 901, cysteine 904, cysteine 921, and cysteine 924.

Belongs to the class-I aminoacyl-tRNA synthetase family. IleS type 1 subfamily. Monomer. Requires Zn(2+) as cofactor.

It is found in the cytoplasm. The enzyme catalyses tRNA(Ile) + L-isoleucine + ATP = L-isoleucyl-tRNA(Ile) + AMP + diphosphate. Its function is as follows. Catalyzes the attachment of isoleucine to tRNA(Ile). As IleRS can inadvertently accommodate and process structurally similar amino acids such as valine, to avoid such errors it has two additional distinct tRNA(Ile)-dependent editing activities. One activity is designated as 'pretransfer' editing and involves the hydrolysis of activated Val-AMP. The other activity is designated 'posttransfer' editing and involves deacylation of mischarged Val-tRNA(Ile). This is Isoleucine--tRNA ligase from Escherichia coli O6:K15:H31 (strain 536 / UPEC).